A 31-amino-acid chain; its full sequence is Cycloviolacin-O14 (31 aa).

A cross-link (cyclopeptide (Gly-Asn)) is located at residues 1-31 (GSIPACGESCFKGKCYTPGCSCSKYPLCAKN). Intrachain disulfides connect C6–C20, C10–C22, and C15–C28.

Post-translationally, this is a cyclic peptide. As to expression, expressed in leaves and petioles but not in petals, roots and runners (at protein level).

Its function is as follows. Probably participates in a plant defense mechanism. Has hemolytic activity. The chain is Cycloviolacin-O14 from Viola odorata (Sweet violet).